Here is a 197-residue protein sequence, read N- to C-terminus: Holliday junction branch migration complex subunit RuvA (197 aa).

Residues 1 to 63 are domain I; that stretch reads MYAYLKGIIT…EDAHLLYGFR (63 aa). Residues 64–142 are domain II; sequence SEDEKKLFLS…VAGDDLPAKV (79 aa). The segment at 143–147 is flexible linker; the sequence is AVQAS. The tract at residues 148–197 is domain III; that stretch reads AENQELEEAMEAMLALGYKATELKKIKKFFEGTTDTAENYIKSALKMLVK.

The protein belongs to the RuvA family. Homotetramer. Forms an RuvA(8)-RuvB(12)-Holliday junction (HJ) complex. HJ DNA is sandwiched between 2 RuvA tetramers; dsDNA enters through RuvA and exits via RuvB. An RuvB hexamer assembles on each DNA strand where it exits the tetramer. Each RuvB hexamer is contacted by two RuvA subunits (via domain III) on 2 adjacent RuvB subunits; this complex drives branch migration. In the full resolvosome a probable DNA-RuvA(4)-RuvB(12)-RuvC(2) complex forms which resolves the HJ.

Its subcellular location is the cytoplasm. Its function is as follows. The RuvA-RuvB-RuvC complex processes Holliday junction (HJ) DNA during genetic recombination and DNA repair, while the RuvA-RuvB complex plays an important role in the rescue of blocked DNA replication forks via replication fork reversal (RFR). RuvA specifically binds to HJ cruciform DNA, conferring on it an open structure. The RuvB hexamer acts as an ATP-dependent pump, pulling dsDNA into and through the RuvAB complex. HJ branch migration allows RuvC to scan DNA until it finds its consensus sequence, where it cleaves and resolves the cruciform DNA. The protein is Holliday junction branch migration complex subunit RuvA of Streptococcus pneumoniae serotype 19F (strain G54).